The chain runs to 201 residues: Probable cytokinin riboside 5'-monophosphate phosphoribohydrolase LOG6 (201 aa).

Residues E89, 107 to 108, 124 to 130, and T136 each bind substrate; these read RK and GYGTLEE.

Belongs to the LOG family.

The enzyme catalyses N(6)-(dimethylallyl)adenosine 5'-phosphate + H2O = N(6)-dimethylallyladenine + D-ribose 5-phosphate. It catalyses the reaction 9-ribosyl-trans-zeatin 5'-phosphate + H2O = trans-zeatin + D-ribose 5-phosphate. Functionally, cytokinin-activating enzyme working in the direct activation pathway. Phosphoribohydrolase that converts inactive cytokinin nucleotides to the biologically active free-base forms. The sequence is that of Probable cytokinin riboside 5'-monophosphate phosphoribohydrolase LOG6 (LOG6) from Arabidopsis thaliana (Mouse-ear cress).